Consider the following 271-residue polypeptide: Virulence regulon transcriptional activator VirF (271 aa).

The HTH araC/xylS-type domain maps to 167–265 (ERLQKFMEEN…GCTPSQARLT (99 aa)). 2 DNA-binding regions (H-T-H motif) span residues 184–205 (SKFA…GTVY) and 232–255 (IVDI…RRRF).

Functionally, transcriptional activator of the Yersinia virulence regulon. This Yersinia enterocolitica serotype O:8 / biotype 1B (strain NCTC 13174 / 8081) protein is Virulence regulon transcriptional activator VirF (virF).